Reading from the N-terminus, the 689-residue chain is Glycine--tRNA ligase beta subunit (689 aa).

Belongs to the class-II aminoacyl-tRNA synthetase family. Tetramer of two alpha and two beta subunits.

The protein localises to the cytoplasm. The catalysed reaction is tRNA(Gly) + glycine + ATP = glycyl-tRNA(Gly) + AMP + diphosphate. The sequence is that of Glycine--tRNA ligase beta subunit from Shigella boydii serotype 4 (strain Sb227).